A 384-amino-acid polypeptide reads, in one-letter code: Putative glutamate--cysteine ligase 2 (384 aa).

The protein belongs to the glutamate--cysteine ligase type 2 family. YbdK subfamily.

The enzyme catalyses L-cysteine + L-glutamate + ATP = gamma-L-glutamyl-L-cysteine + ADP + phosphate + H(+). Its function is as follows. ATP-dependent carboxylate-amine ligase which exhibits weak glutamate--cysteine ligase activity. The chain is Putative glutamate--cysteine ligase 2 from Dechloromonas aromatica (strain RCB).